The following is a 515-amino-acid chain: Ecdysteroid UDP-glucosyltransferase (515 aa).

A signal peptide spans 1–31; it reads MKMIILVVSLHVLRNSAAVRVLCMFPTPSYS.

Belongs to the UDP-glycosyltransferase family.

In terms of biological role, catalyzes the transfer of glucose from UDP-glucose to ecdysteroids which are insect molting hormones. Expression of egt interferes with normal insect development and block molting. This is Ecdysteroid UDP-glucosyltransferase (EGT) from Spodoptera littoralis nuclear polyhedrosis virus (SlNPV).